A 115-amino-acid chain; its full sequence is Holo-[acyl-carrier-protein] synthase (115 aa).

Residues Asp-5 and Glu-51 each contribute to the Mg(2+) site.

Belongs to the P-Pant transferase superfamily. AcpS family. The cofactor is Mg(2+).

It is found in the cytoplasm. It carries out the reaction apo-[ACP] + CoA = holo-[ACP] + adenosine 3',5'-bisphosphate + H(+). In terms of biological role, transfers the 4'-phosphopantetheine moiety from coenzyme A to a Ser of acyl-carrier-protein. This is Holo-[acyl-carrier-protein] synthase from Helicobacter acinonychis (strain Sheeba).